Reading from the N-terminus, the 203-residue chain is Protein GrpE (203 aa).

Residues 1-10 (MSNESIKAEQ) show a composition bias toward basic and acidic residues. The interval 1-20 (MSNESIKAEQDLIQEGVESE) is disordered.

The protein belongs to the GrpE family. In terms of assembly, homodimer.

The protein localises to the cytoplasm. In terms of biological role, participates actively in the response to hyperosmotic and heat shock by preventing the aggregation of stress-denatured proteins, in association with DnaK and GrpE. It is the nucleotide exchange factor for DnaK and may function as a thermosensor. Unfolded proteins bind initially to DnaJ; upon interaction with the DnaJ-bound protein, DnaK hydrolyzes its bound ATP, resulting in the formation of a stable complex. GrpE releases ADP from DnaK; ATP binding to DnaK triggers the release of the substrate protein, thus completing the reaction cycle. Several rounds of ATP-dependent interactions between DnaJ, DnaK and GrpE are required for fully efficient folding. This chain is Protein GrpE, found in Shewanella sp. (strain MR-7).